Consider the following 128-residue polypeptide: Large ribosomal subunit protein uL24 (128 aa).

A disordered region spans residues 105-128 (KAKSRQVGKEKGKYKEETIEKMQE).

The protein belongs to the universal ribosomal protein uL24 family. Component of the large ribosomal subunit.

It localises to the cytoplasm. In terms of biological role, component of the large ribosomal subunit. The ribosome is a large ribonucleoprotein complex responsible for the synthesis of proteins in the cell. The protein is Large ribosomal subunit protein uL24 (RPL26) of Gallus gallus (Chicken).